Here is a 311-residue protein sequence, read N- to C-terminus: AT-hook motif nuclear-localized protein 27 (311 aa).

Residues 40 to 105 form a disordered region; sequence HHHQHQQHQQ…KNKAKPPIIV (66 aa). Residues 55 to 75 show a composition bias toward basic and acidic residues; that stretch reads DDSRESDHSNKDHHQQGRPDS. A DNA-binding region (a.T hook) is located at residues 86–98; it reads KRPRGRPPGSKNK. Residues 110–258 form the PPC domain; that stretch reads PNALRSHVLE…EEGGGGGGGG (149 aa). The tract at residues 178–183 is required for the binding to non-AHL interactors; the sequence is GRFEIL. A disordered region spans residues 246–311; the sequence is EEEEEGGGGG…GAGTPSRPPF (66 aa). Gly residues predominate over residues 252–262; sequence GGGGGGGGGGP. Residues 263-277 show a composition bias toward low complexity; the sequence is PQMQQAPSASPPSGV. Over residues 278–292 the composition is skewed to gly residues; the sequence is TGQGQLGGNVGGYGF.

As to quaternary structure, homodimer. Interacts with AHL12, AHL25, AHL29, TCP4, TCP13, EF114, ATAF2/NAC081, histone H2B.1, histone H3.3 and histone H4. As to expression, expressed in the hypocotyl and the vascular tissue of seedling.

Its subcellular location is the nucleus. Transcription factor that specifically binds AT-rich DNA sequences related to the nuclear matrix attachment regions (MARs). Negatively regulates plant innate immunity (PTI) to pathogens through the down-regulation of the PAMP-triggered FRK1 expression. Acts redundantly with AHL18, AHL22 and AHL29 in the regulation of flowering and regulation of the hypocotyl elongation. Acts as a chromatin remodeling factor that negatively regulates the leaf senescence. Acts redundantly with AHL29/SOB3 to modulate hypocotyl growth inhibition in response to light. This is AT-hook motif nuclear-localized protein 27 from Arabidopsis thaliana (Mouse-ear cress).